The sequence spans 118 residues: Ribonuclease P protein component (118 aa).

This sequence belongs to the RnpA family. As to quaternary structure, consists of a catalytic RNA component (M1 or rnpB) and a protein subunit.

It carries out the reaction Endonucleolytic cleavage of RNA, removing 5'-extranucleotides from tRNA precursor.. RNaseP catalyzes the removal of the 5'-leader sequence from pre-tRNA to produce the mature 5'-terminus. It can also cleave other RNA substrates such as 4.5S RNA. The protein component plays an auxiliary but essential role in vivo by binding to the 5'-leader sequence and broadening the substrate specificity of the ribozyme. In Shewanella frigidimarina (strain NCIMB 400), this protein is Ribonuclease P protein component.